A 212-amino-acid polypeptide reads, in one-letter code: Dephospho-CoA kinase (212 aa).

In terms of domain architecture, DPCK spans 3–207; sequence IIGLTGGIAS…RHLADDPEPG (205 aa). ATP is bound at residue 11–16; it reads ASGKST.

It belongs to the CoaE family.

It localises to the cytoplasm. The catalysed reaction is 3'-dephospho-CoA + ATP = ADP + CoA + H(+). It participates in cofactor biosynthesis; coenzyme A biosynthesis; CoA from (R)-pantothenate: step 5/5. Functionally, catalyzes the phosphorylation of the 3'-hydroxyl group of dephosphocoenzyme A to form coenzyme A. The polypeptide is Dephospho-CoA kinase (Moorella thermoacetica (strain ATCC 39073 / JCM 9320)).